The primary structure comprises 85 residues: Large ribosomal subunit protein bL27 (85 aa).

The protein belongs to the bacterial ribosomal protein bL27 family.

The chain is Large ribosomal subunit protein bL27 from Campylobacter curvus (strain 525.92).